Here is a 338-residue protein sequence, read N- to C-terminus: uncharacterized protein (338 aa).

The N-terminal stretch at 1–29 (MIKQLYKNITICSLAISTALTVFPATSYA) is a signal peptide.

This sequence belongs to the aerolysin family.

This is an uncharacterized protein from Staphylococcus aureus (strain Mu50 / ATCC 700699).